Consider the following 422-residue polypeptide: Probable FBD-associated F-box protein At1g32375 (422 aa).

The F-box domain occupies 1–53; sequence MDKLSQLPEALLVRILSLLSAKDVVSTMVLSKRWQFLWMLVPKLIYDDSYQAI. The FBD domain occupies 342-392; the sequence is CWNEPSAVPECLLTSLETLEWVKYEGTEEEKEVAAFILRSGSCLKKVTISS.

This chain is Probable FBD-associated F-box protein At1g32375, found in Arabidopsis thaliana (Mouse-ear cress).